The sequence spans 641 residues: MLV-related proviral Env polyprotein (641 aa).

The first 32 residues, Met1–Ser32, serve as a signal peptide directing secretion. The Extracellular portion of the chain corresponds to Val33–Leu581. 2 N-linked (GlcNAc...) asparagine glycosylation sites follow: Asn43 and Asn58. 2 cysteine pairs are disulfide-bonded: Cys109–Cys126 and Cys118–Cys131. A disordered region spans residues Arg256–Thr281. An N-linked (GlcNAc...) asparagine glycan is attached at Asn297. Disulfide bonds link Cys307-Cys310, Cys307-Cys534, Cys337-Cys391, Cys356-Cys368, Cys398-Cys411, and Cys526-Cys533. The short motif at Cys307–Cys310 is the CXXC element. A glycan (N-linked (GlcNAc...) asparagine) is linked at Asn336. Asn369 carries N-linked (GlcNAc...) asparagine glycosylation. Residues Val443–Val463 form a fusion peptide region. Coiled coils occupy residues Val471–Leu520 and Lys530–Gly566. Positions Leu509 to Leu525 are immunosuppression. Residues Cys526–Cys534 carry the CX6CC motif. Residues Ile582–Ile602 form a helical membrane-spanning segment. Cys601 carries S-palmitoyl cysteine lipidation. Topologically, residues Leu603–Glu641 are cytoplasmic. The YXXL motif; contains endocytosis signal motif lies at Tyr626 to Leu629.

The mature envelope protein (Env) consists of a trimer of SU-TM heterodimers attached by a labile interchain disulfide bond. Specific enzymatic cleavages in vivo yield mature proteins. Envelope glycoproteins are synthesized as an inactive precursor that is N-glycosylated and processed likely by host cell furin or by a furin-like protease in the Golgi to yield the mature SU and TM proteins. The cleavage site between SU and TM requires the minimal sequence [KR]-X-[KR]-R. The R-peptide is released from the C-terminus of the cytoplasmic tail of the TM protein upon particle formation as a result of proteolytic cleavage by the viral protease. Cleavage of this peptide is required for TM to become fusogenic. In terms of processing, the CXXC motif is highly conserved across a broad range of retroviral envelope proteins. It is thought to participate in the formation of a labile disulfide bond possibly with the CX6CC motif present in the transmembrane protein. Isomerization of the intersubunit disulfide bond to an SU intrachain disulfide bond is thought to occur upon receptor recognition in order to allow membrane fusion. Post-translationally, the transmembrane protein is palmitoylated. The R-peptide is palmitoylated.

The protein resides in the virion membrane. The protein localises to the cell membrane. Its function is as follows. The surface protein (SU) attaches the virus to the host cell by binding to its receptor. This interaction triggers the refolding of the transmembrane protein (TM) and is thought to activate its fusogenic potential by unmasking its fusion peptide. Fusion occurs at the host cell plasma membrane. In terms of biological role, the transmembrane protein (TM) acts as a class I viral fusion protein. Under the current model, the protein has at least 3 conformational states: pre-fusion native state, pre-hairpin intermediate state, and post-fusion hairpin state. During viral and target cell membrane fusion, the coiled coil regions (heptad repeats) assume a trimer-of-hairpins structure, positioning the fusion peptide in close proximity to the C-terminal region of the ectodomain. The formation of this structure appears to drive apposition and subsequent fusion of viral and target cell membranes. Membranes fusion leads to delivery of the nucleocapsid into the cytoplasm. The chain is MLV-related proviral Env polyprotein from Mus musculus (Mouse).